Here is a 133-residue protein sequence, read N- to C-terminus: Glycine cleavage system H protein (133 aa).

The region spanning 24–106 (IATIGISAYA…YGDGWLLKVR (83 aa)) is the Lipoyl-binding domain. Lysine 65 carries the post-translational modification N6-lipoyllysine.

The protein belongs to the GcvH family. The glycine cleavage system is composed of four proteins: P, T, L and H. Requires (R)-lipoate as cofactor.

The glycine cleavage system catalyzes the degradation of glycine. The H protein shuttles the methylamine group of glycine from the P protein to the T protein. The polypeptide is Glycine cleavage system H protein (Crocosphaera subtropica (strain ATCC 51142 / BH68) (Cyanothece sp. (strain ATCC 51142))).